A 341-amino-acid chain; its full sequence is N-acetyl-gamma-glutamyl-phosphate reductase (341 aa).

Cys-163 is an active-site residue.

This sequence belongs to the NAGSA dehydrogenase family. Type 1 subfamily.

It localises to the cytoplasm. It catalyses the reaction N-acetyl-L-glutamate 5-semialdehyde + phosphate + NADP(+) = N-acetyl-L-glutamyl 5-phosphate + NADPH + H(+). The protein operates within amino-acid biosynthesis; L-arginine biosynthesis; N(2)-acetyl-L-ornithine from L-glutamate: step 3/4. Catalyzes the NADPH-dependent reduction of N-acetyl-5-glutamyl phosphate to yield N-acetyl-L-glutamate 5-semialdehyde. The sequence is that of N-acetyl-gamma-glutamyl-phosphate reductase from Idiomarina loihiensis (strain ATCC BAA-735 / DSM 15497 / L2-TR).